A 293-amino-acid polypeptide reads, in one-letter code: Elongation factor Ts (293 aa).

The segment at Thr-79–Val-82 is involved in Mg(2+) ion dislocation from EF-Tu.

This sequence belongs to the EF-Ts family.

Its subcellular location is the cytoplasm. Its function is as follows. Associates with the EF-Tu.GDP complex and induces the exchange of GDP to GTP. It remains bound to the aminoacyl-tRNA.EF-Tu.GTP complex up to the GTP hydrolysis stage on the ribosome. This Bacillus velezensis (strain DSM 23117 / BGSC 10A6 / LMG 26770 / FZB42) (Bacillus amyloliquefaciens subsp. plantarum) protein is Elongation factor Ts.